We begin with the raw amino-acid sequence, 274 residues long: tRNA-cytidine(32) 2-sulfurtransferase (274 aa).

The short motif at Ser-40–Ser-45 is the PP-loop motif element. Residues Cys-115, Cys-118, and Cys-206 each coordinate [4Fe-4S] cluster.

The protein belongs to the TtcA family. In terms of assembly, homodimer. Mg(2+) serves as cofactor. Requires [4Fe-4S] cluster as cofactor.

It is found in the cytoplasm. It carries out the reaction cytidine(32) in tRNA + S-sulfanyl-L-cysteinyl-[cysteine desulfurase] + AH2 + ATP = 2-thiocytidine(32) in tRNA + L-cysteinyl-[cysteine desulfurase] + A + AMP + diphosphate + H(+). It participates in tRNA modification. Its function is as follows. Catalyzes the ATP-dependent 2-thiolation of cytidine in position 32 of tRNA, to form 2-thiocytidine (s(2)C32). The sulfur atoms are provided by the cysteine/cysteine desulfurase (IscS) system. The chain is tRNA-cytidine(32) 2-sulfurtransferase from Pseudomonas putida (strain ATCC 700007 / DSM 6899 / JCM 31910 / BCRC 17059 / LMG 24140 / F1).